The primary structure comprises 437 residues: Sonic hedgehog protein (437 aa).

Positions 1–24 (MLLLLARCFLVILASSLLVCPGLA) are cleaved as a signal peptide. Cysteine 25 carries the N-palmitoyl cysteine lipid modification. Residues 33-39 (KRRHPKK) carry the Cardin-Weintraub motif. Ca(2+) contacts are provided by glutamate 90, glutamate 91, aspartate 96, threonine 126, glutamate 127, aspartate 130, and aspartate 132. Residues histidine 141, aspartate 148, and histidine 183 each coordinate Zn(2+). Glycine 198 is lipidated: Cholesterol glycine ester. A glycan (N-linked (GlcNAc...) asparagine) is linked at asparagine 279.

Belongs to the hedgehog family. As to quaternary structure, interacts with HHATL/GUP1 which negatively regulates HHAT-mediated palmitoylation of the SHH N-terminus. Interacts with BOC and CDON. Interacts with HHIP. Interacts with DISP1 via its cholesterol anchor. Interacts with SCUBE2. Interacts with glypican GPC3. Multimer. The C-terminal domain displays an autoproteolysis activity and a cholesterol transferase activity. Both activities result in the cleavage of the full-length protein and covalent attachment of a cholesterol moiety to the C-terminal of the newly generated N-terminal fragment (ShhN). Cholesterylation is required for the sonic hedgehog protein N-product targeting to lipid rafts and multimerization. ShhN is the active species in both local and long-range signaling, whereas the C-product (ShhC) is degraded in the endoplasmic reticulum. Post-translationally, N-palmitoylation by HHAT of ShhN is required for sonic hedgehog protein N-product multimerization and full activity. It is a prerequisite for the membrane-proximal positioning and the subsequent shedding of this N-terminal peptide. In terms of processing, the lipidated N- and C-terminal peptides of ShhNp can be cleaved (shedding). The N-terminal palmitoylated peptide is cleaved at the Cardin-Weintraub (CW) motif site. The cleavage reduced the interactions with heparan sulfate. The cleavage is enhanced by SCUBE2. Expressed in a number of embryonic tissues including the notochord, ventral neural tube, floor plate, lung bud, zone of polarizing activity and posterior distal mesenchyme of limbs. In the adult, expressed in lung and neural retina.

It is found in the endoplasmic reticulum membrane. The protein resides in the golgi apparatus membrane. The protein localises to the cell membrane. The catalysed reaction is glycyl-L-cysteinyl-[protein] + cholesterol + H(+) = [protein]-C-terminal glycyl cholesterol ester + N-terminal L-cysteinyl-[protein]. The C-terminal part of the sonic hedgehog protein precursor displays an autoproteolysis and a cholesterol transferase activity. Both activities result in the cleavage of the full-length protein into two parts (ShhN and ShhC) followed by the covalent attachment of a cholesterol moiety to the C-terminal of the newly generated ShhN. Both activities occur in the reticulum endoplasmic. Once cleaved, ShhC is degraded in the endoplasmic reticulum. Its function is as follows. The dually lipidated sonic hedgehog protein N-product (ShhNp) is a morphogen which is essential for a variety of patterning events during development. Induces ventral cell fate in the neural tube and somites. Involved in the patterning of the anterior-posterior axis of the developing limb bud. Essential for axon guidance. Binds to the patched (PTCH1) receptor, which functions in association with smoothened (SMO), to activate the transcription of target genes. In the absence of SHH, PTCH1 represses the constitutive signaling activity of SMO. The polypeptide is Sonic hedgehog protein (Mus musculus (Mouse)).